The chain runs to 1043 residues: Protein SLOW WALKER 2 (1043 aa).

Disordered regions lie at residues 32 to 113 (SALP…SIDD), 444 to 469 (QGAD…VSTD), 632 to 737 (DIEH…GGYD), and 861 to 1043 (SKKK…KASE). Positions 44–51 (FRKPAKSK) match the Nuclear localization signal 1 motif. A compositionally biased stretch (basic residues) spans 47–59 (PAKSKTQKRKKPK). Basic and acidic residues-rich tracts occupy residues 80 to 95 (EKGK…KDAP) and 444 to 466 (QGAD…KQEV). The short motif at 441-448 (NRKQGADD) is the Nuclear localization signal 2 element. A compositionally biased stretch (acidic residues) spans 632 to 645 (DIEHFEDVIEGDDV). A compositionally biased stretch (basic and acidic residues) spans 646 to 673 (DPNKKAENDENVVEVDHDGVEKSSRDGD). 2 stretches are compositionally biased toward acidic residues: residues 688–699 (DEEDDNASDDSE) and 872–983 (EEAA…DSDG). A compositionally biased stretch (basic residues) spans 988–1000 (SKKKKKEKRKRKS). Residues 1006 to 1031 (EEYKHLIDQDEKEDSKTKRKATSEPT) show a composition bias toward basic and acidic residues. A Nuclear localization signal 3 motif is present at residues 1022 to 1029 (TKRKATSE). The segment covering 1032-1043 (KKKKKKKSKASE) has biased composition (basic residues).

This sequence belongs to the CBF/MAK21 family. In terms of assembly, interacts with RBL in both the nucleolus and nucleoplasm. Binds to NOC2. As to expression, mainly expressed in actively dividing tissues (e.g. root tips, lateral root primordia, shoot apices, young leaves, inflorescences and pollen grains) through the plant, including roots, stems, leaves, inflorescences, siliques and seedlings, and in gametophytes.

The protein localises to the nucleus. The protein resides in the nucleolus. Together with NOC2, probably involved in pre-ribosome export from the nucleus to the cytoplasm. Required for coordinated cell cycle progression during female gametophyte and pollen development. In Arabidopsis thaliana (Mouse-ear cress), this protein is Protein SLOW WALKER 2.